We begin with the raw amino-acid sequence, 153 residues long: S-ribosylhomocysteine lyase (153 aa).

H57, H61, and C124 together coordinate Fe cation.

The protein belongs to the LuxS family. In terms of assembly, homodimer. The cofactor is Fe cation.

The catalysed reaction is S-(5-deoxy-D-ribos-5-yl)-L-homocysteine = (S)-4,5-dihydroxypentane-2,3-dione + L-homocysteine. Its function is as follows. Involved in the synthesis of autoinducer 2 (AI-2) which is secreted by bacteria and is used to communicate both the cell density and the metabolic potential of the environment. The regulation of gene expression in response to changes in cell density is called quorum sensing. Catalyzes the transformation of S-ribosylhomocysteine (RHC) to homocysteine (HC) and 4,5-dihydroxy-2,3-pentadione (DPD). The polypeptide is S-ribosylhomocysteine lyase (Oceanobacillus iheyensis (strain DSM 14371 / CIP 107618 / JCM 11309 / KCTC 3954 / HTE831)).